The chain runs to 90 residues: Probable Fe(2+)-trafficking protein (90 aa).

Belongs to the Fe(2+)-trafficking protein family.

Could be a mediator in iron transactions between iron acquisition and iron-requiring processes, such as synthesis and/or repair of Fe-S clusters in biosynthetic enzymes. The sequence is that of Probable Fe(2+)-trafficking protein from Pseudomonas aeruginosa (strain UCBPP-PA14).